Consider the following 412-residue polypeptide: MGSPWNGSDGPEGAREPPWPALPPCDERRCSPFPLGALVPVTAVCLCLFVVGVSGNVVTVMLIGRYRDMRTTTNLYLGSMAVSDLLILLGLPFDLYRLWRSRPWVFGPLLCRLSLYVGEGCTYATLLHMTALSVERYLAICRPLRARVLVTRRRVRALIAVLWAVALLSAGPFLFLVGVEQDPGISVVPGLNGTARIASSPLASSPPLWLSRAPPPSPPSGPETAEAAALFSRECRPSPAQLGALRVMLWVTTAYFFLPFLCLSILYGLIGRELWSSRRPLRGPAASGRERGHRQTVRVLLVVVLAFIICWLPFHVGRIIYINTEDSRMMYFSQYFNIVALQLFYLSASINPILYNLISKKYRAAAFKLLLARKSRPRGFHRSRDTAGEVAGDTGGDTVGYTETSANVKTMG.

Over 1 to 35 the chain is Extracellular; the sequence is MGSPWNGSDGPEGAREPPWPALPPCDERRCSPFPL. N6 carries N-linked (GlcNAc...) asparagine glycosylation. The chain crosses the membrane as a helical span at residues 36 to 56; the sequence is GALVPVTAVCLCLFVVGVSGN. Topologically, residues 57–74 are cytoplasmic; that stretch reads VVTVMLIGRYRDMRTTTN. The helical transmembrane segment at 75–94 threads the bilayer; the sequence is LYLGSMAVSDLLILLGLPFD. At 95 to 112 the chain is on the extracellular side; the sequence is LYRLWRSRPWVFGPLLCR. Residues C111 and C235 are joined by a disulfide bond. A helical transmembrane segment spans residues 113 to 134; the sequence is LSLYVGEGCTYATLLHMTALSV. The Cytoplasmic portion of the chain corresponds to 135–157; it reads ERYLAICRPLRARVLVTRRRVRA. The helical transmembrane segment at 158-178 threads the bilayer; sequence LIAVLWAVALLSAGPFLFLVG. Residues 179-246 are Extracellular-facing; that stretch reads VEQDPGISVV…PSPAQLGALR (68 aa). N192 is a glycosylation site (N-linked (GlcNAc...) asparagine). Residues 247 to 270 traverse the membrane as a helical segment; sequence VMLWVTTAYFFLPFLCLSILYGLI. Over 271–298 the chain is Cytoplasmic; the sequence is GRELWSSRRPLRGPAASGRERGHRQTVR. The helical transmembrane segment at 299-320 threads the bilayer; the sequence is VLLVVVLAFIICWLPFHVGRII. Over 321–334 the chain is Extracellular; it reads YINTEDSRMMYFSQ. The helical transmembrane segment at 335–358 threads the bilayer; sequence YFNIVALQLFYLSASINPILYNLI. At 359–412 the chain is on the cytoplasmic side; sequence SKKYRAAAFKLLLARKSRPRGFHRSRDTAGEVAGDTGGDTVGYTETSANVKTMG.

The protein belongs to the G-protein coupled receptor 1 family. Expressed only in thyroid, stomach, and bone marrow.

The protein resides in the cell membrane. Functionally, receptor for motilin. The protein is Motilin receptor (MLNR) of Homo sapiens (Human).